An 89-amino-acid chain; its full sequence is Small ribosomal subunit protein uS15 (89 aa).

The protein belongs to the universal ribosomal protein uS15 family. Part of the 30S ribosomal subunit. Forms a bridge to the 50S subunit in the 70S ribosome, contacting the 23S rRNA.

In terms of biological role, one of the primary rRNA binding proteins, it binds directly to 16S rRNA where it helps nucleate assembly of the platform of the 30S subunit by binding and bridging several RNA helices of the 16S rRNA. Forms an intersubunit bridge (bridge B4) with the 23S rRNA of the 50S subunit in the ribosome. The chain is Small ribosomal subunit protein uS15 from Nitrosococcus oceani (strain ATCC 19707 / BCRC 17464 / JCM 30415 / NCIMB 11848 / C-107).